The primary structure comprises 139 residues: Large-conductance mechanosensitive channel (139 aa).

2 helical membrane-spanning segments follow: residues 9 to 29 (AFAV…GAAF) and 79 to 99 (IQTV…VKAI).

Belongs to the MscL family. Homopentamer.

The protein resides in the cell inner membrane. In terms of biological role, channel that opens in response to stretch forces in the membrane lipid bilayer. May participate in the regulation of osmotic pressure changes within the cell. This Pseudomonas putida (strain ATCC 700007 / DSM 6899 / JCM 31910 / BCRC 17059 / LMG 24140 / F1) protein is Large-conductance mechanosensitive channel.